A 155-amino-acid polypeptide reads, in one-letter code: SsrA-binding protein (155 aa).

Belongs to the SmpB family.

The protein resides in the cytoplasm. In terms of biological role, required for rescue of stalled ribosomes mediated by trans-translation. Binds to transfer-messenger RNA (tmRNA), required for stable association of tmRNA with ribosomes. tmRNA and SmpB together mimic tRNA shape, replacing the anticodon stem-loop with SmpB. tmRNA is encoded by the ssrA gene; the 2 termini fold to resemble tRNA(Ala) and it encodes a 'tag peptide', a short internal open reading frame. During trans-translation Ala-aminoacylated tmRNA acts like a tRNA, entering the A-site of stalled ribosomes, displacing the stalled mRNA. The ribosome then switches to translate the ORF on the tmRNA; the nascent peptide is terminated with the 'tag peptide' encoded by the tmRNA and targeted for degradation. The ribosome is freed to recommence translation, which seems to be the essential function of trans-translation. The sequence is that of SsrA-binding protein from Streptococcus pneumoniae serotype 4 (strain ATCC BAA-334 / TIGR4).